The chain runs to 86 residues: Small ribosomal subunit protein bS20 (86 aa).

The protein belongs to the bacterial ribosomal protein bS20 family.

In terms of biological role, binds directly to 16S ribosomal RNA. The sequence is that of Small ribosomal subunit protein bS20 from Aliarcobacter butzleri (strain RM4018) (Arcobacter butzleri).